A 91-amino-acid chain; its full sequence is Probable Fe(2+)-trafficking protein (91 aa).

This sequence belongs to the Fe(2+)-trafficking protein family. In terms of assembly, monomer.

Its function is as follows. Could be a mediator in iron transactions between iron acquisition and iron-requiring processes, such as synthesis and/or repair of Fe-S clusters in biosynthetic enzymes. The sequence is that of Probable Fe(2+)-trafficking protein from Cronobacter sakazakii (strain ATCC BAA-894) (Enterobacter sakazakii).